Consider the following 89-residue polypeptide: Neuropeptide S (89 aa).

Positions 1–23 are cleaved as a signal peptide; that stretch reads MISSVKLNLILVLSLSTMHVFWC. Residues 24-67 constitute a propeptide that is removed on maturation; sequence YPVPSSKVSGKSDYFLILLNSCPTRLDRSKELAFLKPILEKMFV.

It localises to the secreted. Modulates arousal and anxiety. May play an important anorexigenic role. Binds to its receptor NPSR1 with nanomolar affinity to increase intracellular calcium concentrations. This is Neuropeptide S (NPS) from Homo sapiens (Human).